The chain runs to 157 residues: Cyclic pyranopterin monophosphate synthase (157 aa).

Residues 74–76 (MCH) and 112–113 (ME) contribute to the substrate site. D127 is a catalytic residue.

The protein belongs to the MoaC family. As to quaternary structure, homohexamer; trimer of dimers.

It carries out the reaction (8S)-3',8-cyclo-7,8-dihydroguanosine 5'-triphosphate = cyclic pyranopterin phosphate + diphosphate. It functions in the pathway cofactor biosynthesis; molybdopterin biosynthesis. In terms of biological role, catalyzes the conversion of (8S)-3',8-cyclo-7,8-dihydroguanosine 5'-triphosphate to cyclic pyranopterin monophosphate (cPMP). In Sulfurovum sp. (strain NBC37-1), this protein is Cyclic pyranopterin monophosphate synthase.